Reading from the N-terminus, the 388-residue chain is F-box protein At4g00893 (388 aa).

The segment at 1-30 is disordered; sequence MLPSPSVHMASPPPSLNMASHPPSPATASR. Positions 42–88 constitute an F-box domain; that stretch reads NPSFADLPSSLIEEIMLLLVLKDNIRASAACKSWYEAGVSVRVVDKH.

The chain is F-box protein At4g00893 from Arabidopsis thaliana (Mouse-ear cress).